The chain runs to 394 residues: Flap endonuclease 1 (394 aa).

The interval 1 to 104 (MGIKQLFSII…GELAKRFQRK (104 aa)) is N-domain. Asp-34 is a Mg(2+) binding site. DNA is bound by residues Arg-47 and Arg-70. Residues Asp-86, Glu-158, Glu-160, Asp-179, and Asp-181 each coordinate Mg(2+). Residues 122–253 (DVEKFSRRTV…STALKLIREH (132 aa)) are I-domain. Glu-158 contacts DNA. The DNA site is built by Gly-231 and Asp-233. Asp-233 is a binding site for Mg(2+). Residues 341 to 349 (QQARIEGFF) are interaction with PCNA. Basic and acidic residues predominate over residues 356–383 (EEEKKAHKRKLEEQAEQKRKKVKEEKKE). The tract at residues 356–394 (EEEKKAHKRKLEEQAEQKRKKVKEEKKEKAKLKAKPRGA) is disordered. Residues 384 to 394 (KAKLKAKPRGA) are compositionally biased toward basic residues.

The protein belongs to the XPG/RAD2 endonuclease family. FEN1 subfamily. In terms of assembly, interacts with PCNA. Three molecules of FEN1 bind to one PCNA trimer with each molecule binding to one PCNA monomer. PCNA stimulates the nuclease activity without altering cleavage specificity. It depends on Mg(2+) as a cofactor. In terms of processing, phosphorylated. Phosphorylation upon DNA damage induces relocalization to the nuclear plasma.

Its subcellular location is the nucleus. The protein localises to the nucleolus. It localises to the nucleoplasm. The protein resides in the mitochondrion. In terms of biological role, structure-specific nuclease with 5'-flap endonuclease and 5'-3' exonuclease activities involved in DNA replication and repair. During DNA replication, cleaves the 5'-overhanging flap structure that is generated by displacement synthesis when DNA polymerase encounters the 5'-end of a downstream Okazaki fragment. It enters the flap from the 5'-end and then tracks to cleave the flap base, leaving a nick for ligation. Also involved in the long patch base excision repair (LP-BER) pathway, by cleaving within the apurinic/apyrimidinic (AP) site-terminated flap. Acts as a genome stabilization factor that prevents flaps from equilibrating into structures that lead to duplications and deletions. Also possesses 5'-3' exonuclease activity on nicked or gapped double-stranded DNA, and exhibits RNase H activity. Also involved in replication and repair of rDNA and in repairing mitochondrial DNA. In Sordaria macrospora (strain ATCC MYA-333 / DSM 997 / K(L3346) / K-hell), this protein is Flap endonuclease 1.